Here is an 816-residue protein sequence, read N- to C-terminus: MPPKRKTLNAAAEANAHADGHADGNADGHVANTAASSNNARFADLTNIDTPGLGPTTTTLLVEPARSKRQRVSRACDQCRAAREKCDGIQPACFPCVSQGRSCTYQASPKKRGVQTGYIRTLELALAWMFENVARSEDALHNLLVRDAGQGSALLVGKDSPAAERLHARWATSRVNKSITRLLSGQAAQDPSEDGQSPSEDINVQDAGAKTSDFPHAPHLTFSAPKSSTAETRTLPGPVRPPISANTLENNLQPDGTGIGKLPPNHWRLLDIYFSYTHSWLPILEKKDMYQALYQYSEQGSLLPSANVESGVHAELWSALALASFQAAATAASSATGPASAAHGHDNAINPSPADISDTARKLIPLESGPFQVQHCRALLLLCLVSLGRDDWESAWLLVGFAVRVLLVVRTQLPPDDDRPRPRMRALLVACFIVDTIVSMRHNVPAHLKPDDIADLPLPEDGQDQWEPWTPCEGLGGEHTMLQMLRNPAYPLSTFNHLYGVTKLVALELLPRIRTSSQNAPLEFRSRLQQVIGHNSPFSVFVLSQDTASAFVPTAYLTRTVYLWAAAFSEPLNEHYSHLLIETLDQYQKRFGTYAIPPLIPSLLDSLLALKKQSHSSERHRRHLEELFPAYSSIWPRGGRHSNTGLQPIRQLELPPTATATASIMPHVMEQPLSTSINPVNDRFNGIPNPTPYNSDAALDAITQTNDYGSVNTHGILSTYPPPATHLNEASVALAPGGAPPRPPPPYVDSTTNHPPYHSNLVPMANFGYSTVDYDAMVDDLASIEYTDAVDVDPQFMTNLGFVPGCNFSDISTYEQ.

Residues 76–103 constitute a DNA-binding region (zn(2)-C6 fungal-type); that stretch reads CDQCRAAREKCDGIQPACFPCVSQGRSC. Residues 184 to 202 show a composition bias toward polar residues; that stretch reads SGQAAQDPSEDGQSPSEDI. The disordered stretch occupies residues 184 to 235; sequence SGQAAQDPSEDGQSPSEDINVQDAGAKTSDFPHAPHLTFSAPKSSTAETRTL.

The protein localises to the nucleus. Its function is as follows. Transcription activator; part of the qa gene cluster that mediates the catabolism of quinic acid (QA) and as such, allows the use of QA as a sole carbon source. Activates the expression of qa cluster genes by binding to a 16 base-pair consensus sequence 5'-GGRTAARYRYTTAYCC-3' present in the promoters of the target genes. Regulates its own expression. May regulate the expression of many other genes inclusing genes with products in 8 mutually connected metabolic pathways: (1) starch and sucrose metabolism; (2) glycolysis/glucanogenesis; (3) TCA Cycle; (4) butanoate metabolism; (5) pyruvate metabolism; (6) aromatic amino acid and QA metabolism; (7) valine, leucine, and isoleucine degradation; and (8) transport of sugars and amino acids. The polypeptide is Transcription factor qa-1f (Neurospora crassa (strain ATCC 24698 / 74-OR23-1A / CBS 708.71 / DSM 1257 / FGSC 987)).